We begin with the raw amino-acid sequence, 354 residues long: Vanillate O-demethylase oxygenase subunit (354 aa).

In terms of domain architecture, Rieske spans 7–107; the sequence is WYVACTPDEI…VEERYGFIWV (101 aa). The [2Fe-2S] cluster site is built by Cys-47, His-49, Cys-66, and His-69.

It belongs to the bacterial ring-hydroxylating dioxygenase alpha subunit family. As to quaternary structure, this demethylase system consists of two proteins: an oxygenase and an oxygenase reductase. [2Fe-2S] cluster serves as cofactor. Fe cation is required as a cofactor.

The catalysed reaction is vanillate + NADH + O2 + H(+) = 3,4-dihydroxybenzoate + formaldehyde + NAD(+) + H2O. It functions in the pathway xenobiotic degradation; vanillyl-alcohol degradation. This Pseudomonas sp. (strain HR199 / DSM 7063) protein is Vanillate O-demethylase oxygenase subunit (vanA).